A 115-amino-acid polypeptide reads, in one-letter code: Arsenic resistance transcriptional regulator ArsR2 (115 aa).

The HTH arsR-type domain maps to methionine 1–asparagine 90. Residues cysteine 30 and cysteine 32 each coordinate arsenite. Positions valine 31–serine 54 form a DNA-binding region, H-T-H motif.

As to quaternary structure, homodimer.

The protein resides in the cytoplasm. In terms of biological role, binds arsenite and regulates the expression of arsenic efflux pumps. In vitro, also binds antimony and bismuth, but not arsenate. The polypeptide is Arsenic resistance transcriptional regulator ArsR2 (Pseudomonas putida (strain ATCC 47054 / DSM 6125 / CFBP 8728 / NCIMB 11950 / KT2440)).